Reading from the N-terminus, the 347-residue chain is Protein RecA (347 aa).

67 to 74 (GPESSGKT) provides a ligand contact to ATP.

It belongs to the RecA family.

The protein localises to the cytoplasm. Can catalyze the hydrolysis of ATP in the presence of single-stranded DNA, the ATP-dependent uptake of single-stranded DNA by duplex DNA, and the ATP-dependent hybridization of homologous single-stranded DNAs. It interacts with LexA causing its activation and leading to its autocatalytic cleavage. The protein is Protein RecA of Helicobacter acinonychis (strain Sheeba).